The primary structure comprises 1962 residues: PIII-type proteinase (1962 aa).

The first 33 residues, 1–33, serve as a signal peptide directing secretion; sequence MQRKKKGLSILLAGTVALGALAVLPVGEIQAKA. The propeptide occupies 34–187; it reads AISQQTKGSS…VTLAKVYYPT (154 aa). The Peptidase S8 domain maps to 191-697; it reads ANSMANVQAV…AGLVDVKAAI (507 aa). Active-site charge relay system residues include aspartate 217, histidine 281, and serine 620. The tract at residues 1796 to 1938 is disordered; the sequence is GKGDGTTGTS…KTGETTERPA (143 aa). A compositionally biased stretch (gly residues) spans 1797–1812; sequence KGDGTTGTSDKGGGQG. Composition is skewed to polar residues over residues 1856–1865 and 1890–1903; these read RNGQLTSGTS and SQPSSGGNIPTNPA. The LPXTG sorting signal motif lies at 1927–1931; it reads LPKTG. Threonine 1930 bears the Pentaglycyl murein peptidoglycan amidated threonine mark. Residues 1931-1962 constitute a propeptide, removed by sortase; it reads GETTERPAFGFLGVIVVSLMGVLGLKRKQREE.

Belongs to the peptidase S8 family.

The protein resides in the secreted. The protein localises to the cell wall. It catalyses the reaction Endopeptidase activity with very broad specificity, although some subsite preference have been noted, e.g. large hydrophobic residues in the P1 and P4 positions, and Pro in the P2 position. Best known for its action on caseins, although it has been shown to hydrolyze hemoglobin and oxidized insulin B-chain.. Protease which breaks down milk proteins during the growth of the bacteria on milk. The sequence is that of PIII-type proteinase (prtP) from Lactococcus lactis subsp. cremoris (strain SK11).